The following is a 147-amino-acid chain: MSGSKSPKGEFAGRKLLLKRKATRWQHYKYVNRELGLKVKADPLGGAPMGRGIVVEKVGLEAKQPNSAIRKCVKVQLIKNGRVVTAFAPGNHAINFIDEHDEVVIEGIGGPSGQAKGDIPGVRYKVLMVGKNSIRELVRGRQEKVKR.

It belongs to the universal ribosomal protein uS12 family. Part of the 30S ribosomal subunit.

Functionally, with S4 and S5 plays an important role in translational accuracy. Located at the interface of the 30S and 50S subunits. The sequence is that of Small ribosomal subunit protein uS12 from Methanococcus vannielii (strain ATCC 35089 / DSM 1224 / JCM 13029 / OCM 148 / SB).